The chain runs to 117 residues: Large ribosomal subunit protein bL20c (117 aa).

The protein belongs to the bacterial ribosomal protein bL20 family.

The protein localises to the plastid. It localises to the chloroplast. Binds directly to 23S ribosomal RNA and is necessary for the in vitro assembly process of the 50S ribosomal subunit. It is not involved in the protein synthesizing functions of that subunit. This is Large ribosomal subunit protein bL20c from Vitis vinifera (Grape).